The sequence spans 336 residues: Fructose-1,6-bisphosphatase class 1 (336 aa).

Mg(2+) is bound by residues Glu90, Asp112, Leu114, and Asp115. Substrate is bound by residues 115–118 (DGSS), Asn211, and Lys277. Glu283 is a Mg(2+) binding site.

Belongs to the FBPase class 1 family. As to quaternary structure, homotetramer. The cofactor is Mg(2+).

The protein resides in the cytoplasm. It catalyses the reaction beta-D-fructose 1,6-bisphosphate + H2O = beta-D-fructose 6-phosphate + phosphate. The protein operates within carbohydrate biosynthesis; gluconeogenesis. This chain is Fructose-1,6-bisphosphatase class 1, found in Pseudomonas syringae pv. syringae (strain B728a).